The following is a 712-amino-acid chain: Semaphorin-1A (712 aa).

The first 20 residues, 1–20 (MVVKILVWSICLIALCHAWM), serve as a signal peptide directing secretion. The region spanning 21 to 483 (PDSSSKLINH…GKDEIRLANL (463 aa)) is the Sema domain. At 21 to 601 (PDSSSKLINH…IGGCAVRQQL (581 aa)) the chain is on the extracellular side. Asn-42 and Asn-69 each carry an N-linked (GlcNAc...) asparagine glycan. Intrachain disulfides connect Cys-95/Cys-105 and Cys-123/Cys-132. N-linked (GlcNAc...) asparagine glycans are attached at residues Asn-161 and Asn-265. 4 cysteine pairs are disulfide-bonded: Cys-242/Cys-357, Cys-266/Cys-316, Cys-486/Cys-503, and Cys-495/Cys-512. Residues 602-622 (VIYTAGTLHIVVVVVSIVGLF) traverse the membrane as a helical segment. Residues 623–712 (SWLYSGLSVF…TLQKIKKTYI (90 aa)) are Cytoplasmic-facing.

This sequence belongs to the semaphorin family.

The protein localises to the membrane. Functionally, plays a role in growth cones guidance. In Tribolium confusum (Confused flour beetle), this protein is Semaphorin-1A (SEMA-1A).